Reading from the N-terminus, the 469-residue chain is E3 ubiquitin-protein ligase TRIM21 (469 aa).

The segment at 16–55 (CSICLDPMVEPMSIECGHSFCQECISEVGKEGGSVCPVCR) adopts an RING-type zinc-finger fold. The B box-type zinc finger occupies 87–128 (PHGELCVVHREKIHLFCEEDGKALCWVCSQSQKHRDHPMVPI). Residues cysteine 92, histidine 95, cysteine 114, and histidine 120 each contribute to the Zn(2+) site. A coiled-coil region spans residues 128 to 245 (IEEAAQEYQE…RRGSALELLQ (118 aa)). Residue serine 266 is modified to Phosphoserine. Residues 268-467 (DLRNVFYVPG…APLILCPLKT (200 aa)) enclose the B30.2/SPRY domain.

This sequence belongs to the TRIM/RBCC family. As to quaternary structure, homotrimer. Interacts (via C-terminus) with IRF8 (via C-terminus). Component of a SCF(SKP2)-like complex containing CUL1, SKP1, TRIM21 and SKP2. Interacts with CALR, CUL1, FBXW11, HSPA5, IKBKB, IRF3, SKP1 and VCP. Interacts with SKP2; the interaction with SKP2 does not depend on an intact F-box domain. Interacts (via N-terminus and C-terminus) with DCP2 (via N-terminus and C-terminus). Interacts with ULK1, BECN1 and with ATG8 family members, including GABARAP, GABARAPL1, GABARAPL2 and MAP1LC3C/LC3C. Interacts with TRIM21 and SQSTM1/sequestosome 1. Interacts with IRF3. Interacts (via the SPRY domain) with NMI (via coiled-coil domain); the interaction promotes 'Lys-63'-linked ubiquitination of NMI. Interacts with IFI35 and NMI; the interaction facilitates NMI-IFI35 complex formation. In terms of processing, autoubiquitinated; does not lead to its proteasomal degradation. Deubiquitinated by USP4; leading to its stabilization.

The protein localises to the cytoplasm. The protein resides in the cytoplasmic vesicle. It localises to the autophagosome. Its subcellular location is the nucleus. It is found in the P-body. The protein localises to the stress granule. The enzyme catalyses S-ubiquitinyl-[E2 ubiquitin-conjugating enzyme]-L-cysteine + [acceptor protein]-L-lysine = [E2 ubiquitin-conjugating enzyme]-L-cysteine + N(6)-ubiquitinyl-[acceptor protein]-L-lysine.. The protein operates within protein modification; protein ubiquitination. In terms of biological role, E3 ubiquitin-protein ligase whose activity is dependent on E2 enzymes, UBE2D1, UBE2D2, UBE2E1 and UBE2E2. Forms a ubiquitin ligase complex in cooperation with the E2 UBE2D2 that is used not only for the ubiquitination of USP4 and IKBKB but also for its self-ubiquitination. Component of cullin-RING-based SCF (SKP1-CUL1-F-box protein) E3 ubiquitin-protein ligase complexes such as SCF(SKP2)-like complexes. A TRIM21-containing SCF(SKP2)-like complex is shown to mediate ubiquitination of CDKN1B ('Thr-187' phosphorylated-form), thereby promoting its degradation by the proteasome. Monoubiquitinates IKBKB that will negatively regulates Tax-induced NF-kappa-B signaling. Negatively regulates IFN-beta production post-pathogen recognition by catalyzing polyubiquitin-mediated degradation of IRF3. Mediates the ubiquitin-mediated proteasomal degradation of IgG1 heavy chain, which is linked to the VCP-mediated ER-associated degradation (ERAD) pathway. Promotes IRF8 ubiquitination, which enhanced the ability of IRF8 to stimulate cytokine genes transcription in macrophages. Plays a role in the regulation of the cell cycle progression. Enhances the decapping activity of DCP2. Exists as a ribonucleoprotein particle present in all mammalian cells studied and composed of a single polypeptide and one of four small RNA molecules. At least two isoforms are present in nucleated and red blood cells, and tissue specific differences in RO/SSA proteins have been identified. The common feature of these proteins is their ability to bind HY RNAs.2. Involved in the regulation of innate immunity and the inflammatory response in response to IFNG/IFN-gamma. Organizes autophagic machinery by serving as a platform for the assembly of ULK1, Beclin 1/BECN1 and ATG8 family members and recognizes specific autophagy targets, thus coordinating target recognition with assembly of the autophagic apparatus and initiation of autophagy. Also regulates autophagy through FIP200/RB1CC1 ubiquitination and subsequent decreased protein stability. Represses the innate antiviral response by facilitating the formation of the NMI-IFI35 complex through 'Lys-63'-linked ubiquitination of NMI. During viral infection, promotes cell pyroptosis by mediating 'Lys-6'-linked ubiquitination of ISG12a/IFI27, facilitating its translocation into the mitochondria and subsequent CASP3 activation. When up-regulated through the IFN/JAK/STAT signaling pathway, promotes 'Lys-27'-linked ubiquitination of MAVS, leading to the recruitment of TBK1 and up-regulation of innate immunity. Mediates 'Lys-63'-linked polyubiquitination of G3BP1 in response to heat shock, leading to stress granule disassembly. The chain is E3 ubiquitin-protein ligase TRIM21 (TRIM21) from Bos taurus (Bovine).